We begin with the raw amino-acid sequence, 87 residues long: Small ribosomal subunit protein uS15 (87 aa).

Residues 1–19 (MDKAKKQELMAKHARHEGD) show a composition bias toward basic and acidic residues. The disordered stretch occupies residues 1–23 (MDKAKKQELMAKHARHEGDTGSP).

This sequence belongs to the universal ribosomal protein uS15 family. As to quaternary structure, part of the 30S ribosomal subunit. Forms a bridge to the 50S subunit in the 70S ribosome, contacting the 23S rRNA.

Functionally, one of the primary rRNA binding proteins, it binds directly to 16S rRNA where it helps nucleate assembly of the platform of the 30S subunit by binding and bridging several RNA helices of the 16S rRNA. Forms an intersubunit bridge (bridge B4) with the 23S rRNA of the 50S subunit in the ribosome. The polypeptide is Small ribosomal subunit protein uS15 (Clostridium botulinum (strain Loch Maree / Type A3)).